We begin with the raw amino-acid sequence, 274 residues long: tRNA dimethylallyltransferase (274 aa).

Residues 9 to 12 form an interaction with substrate tRNA region; it reads DSLS.

The protein belongs to the IPP transferase family. Monomer. Mg(2+) is required as a cofactor.

It catalyses the reaction adenosine(37) in tRNA + dimethylallyl diphosphate = N(6)-dimethylallyladenosine(37) in tRNA + diphosphate. Functionally, catalyzes the transfer of a dimethylallyl group onto the adenine at position 37 in tRNAs that read codons beginning with uridine, leading to the formation of N6-(dimethylallyl)adenosine (i(6)A). The chain is tRNA dimethylallyltransferase (miaA) from Helicobacter pylori (strain P12).